Reading from the N-terminus, the 96-residue chain is ATP synthase subunit c (96 aa).

A run of 2 helical transmembrane segments spans residues 24-44 (HVGA…VGVG) and 75-95 (AIAE…IFVA).

This sequence belongs to the ATPase C chain family. F-type ATPases have 2 components, F(1) - the catalytic core - and F(0) - the membrane proton channel. F(1) has five subunits: alpha(3), beta(3), gamma(1), delta(1), epsilon(1). F(0) has three main subunits: a(1), b(2) and c(10-14). The alpha and beta chains form an alternating ring which encloses part of the gamma chain. F(1) is attached to F(0) by a central stalk formed by the gamma and epsilon chains, while a peripheral stalk is formed by the delta and b chains.

It localises to the cell membrane. In terms of biological role, f(1)F(0) ATP synthase produces ATP from ADP in the presence of a proton or sodium gradient. F-type ATPases consist of two structural domains, F(1) containing the extramembraneous catalytic core and F(0) containing the membrane proton channel, linked together by a central stalk and a peripheral stalk. During catalysis, ATP synthesis in the catalytic domain of F(1) is coupled via a rotary mechanism of the central stalk subunits to proton translocation. Key component of the F(0) channel; it plays a direct role in translocation across the membrane. A homomeric c-ring of between 10-14 subunits forms the central stalk rotor element with the F(1) delta and epsilon subunits. This chain is ATP synthase subunit c, found in Mycoplasmoides gallisepticum (strain R(low / passage 15 / clone 2)) (Mycoplasma gallisepticum).